The sequence spans 200 residues: DNA dC-&gt;dU-editing enzyme APOBEC-3H (200 aa).

The 123-residue stretch at 4–126 (LTAETFRLQF…KPQQKGLRLL (123 aa)) folds into the CMP/dCMP-type deaminase domain. His54 is a Zn(2+) binding site. The active-site Proton donor is the Glu56. 2 residues coordinate Zn(2+): Cys85 and Cys88. A coiled-coil region spans residues 160 to 182 (YKMLEELDKNSRAIKRRLERIKI).

Belongs to the cytidine and deoxycytidylate deaminase family. Homodimer. Interacts with AGO1, AGO2 and AGO3. It depends on Zn(2+) as a cofactor. (Microbial infection) Following infection by some HIV-1 strains, such as isolate BRU/LAI, can be ubiquitinated by a cullin-5-RING E3 ubiquitin-protein ligase complex (ECS complex) hijacked by the HIV-1 Vif protein, leading to its degradation. Ubiquitination by the ECS complex is however less efficent compared to APOBEC3G or APOBEC3G. Expressed in lymphoid organs. Also detected in non-lymphoid tissues including lung, testis, ovary, fetal liver and skin.

It is found in the cytoplasm. The protein localises to the nucleus. Its subcellular location is the P-body. The catalysed reaction is a 2'-deoxycytidine in single-stranded DNA + H2O + H(+) = a 2'-deoxyuridine in single-stranded DNA + NH4(+). APOBEC3H activity is regulated by RNA. While RNA-binding inhibits the DNA deaminase activity, double-stranded RNA is required for HIV-1 restriction by promoting APOBEC3H homodimerization and packaging into retroviral nucleocapsids. Its activity is regulated as follows. (Microbial infection) Antiviral activity is inhibited to some extent by the HIV-1 virion infectivity factor (VIF), that prevents its incorporation into progeny virions by both inhibiting its translation and/or by inducing its ubiquitination and subsequent degradation by the 26S proteasome. In terms of biological role, DNA deaminase (cytidine deaminase) which acts as an inhibitor of retrovirus replication and retrotransposon mobility via deaminase-dependent and -independent mechanisms. The A3H-var/haplotype 2 exhibits antiviral activity against vif-deficient HIV-1. After the penetration of retroviral nucleocapsids into target cells of infection and the initiation of reverse transcription, it can induce the conversion of cytosine to uracil in the minus-sense single-strand viral DNA, leading to G-to-A hypermutations in the subsequent plus-strand viral DNA. The resultant detrimental levels of mutations in the proviral genome, along with a deamination-independent mechanism that works prior to the proviral integration, together exert efficient antiretroviral effects in infected target cells. Selectively targets single-stranded DNA and does not deaminate double-stranded DNA or single- or double-stranded RNA. Exhibits antiviral activity also against T-cell leukemia virus type 1 (HTLV-1) and may inhibit the mobility of LTR and non-LTR retrotransposons. The polypeptide is DNA dC-&gt;dU-editing enzyme APOBEC-3H (Homo sapiens (Human)).